Consider the following 717-residue polypeptide: DNA ligase (717 aa).

Residues 44 to 48 (DADYD), 93 to 94 (SL), and Glu127 contribute to the NAD(+) site. The active-site N6-AMP-lysine intermediate is the Lys129. Residues Arg150, Glu186, Lys302, and Lys326 each contribute to the NAD(+) site. Residues Cys431, Cys434, Cys455, and Cys461 each contribute to the Zn(2+) site. A BRCT domain is found at 639–717 (STDSPVAGKT…EDEWLALIGG (79 aa)).

The protein belongs to the NAD-dependent DNA ligase family. LigA subfamily. It depends on Mg(2+) as a cofactor. Mn(2+) is required as a cofactor.

The catalysed reaction is NAD(+) + (deoxyribonucleotide)n-3'-hydroxyl + 5'-phospho-(deoxyribonucleotide)m = (deoxyribonucleotide)n+m + AMP + beta-nicotinamide D-nucleotide.. Its function is as follows. DNA ligase that catalyzes the formation of phosphodiester linkages between 5'-phosphoryl and 3'-hydroxyl groups in double-stranded DNA using NAD as a coenzyme and as the energy source for the reaction. It is essential for DNA replication and repair of damaged DNA. The protein is DNA ligase of Sinorhizobium fredii (strain NBRC 101917 / NGR234).